The chain runs to 735 residues: Putative RNA polymerase II subunit B1 CTD phosphatase RPAP2 homolog (735 aa).

The RTR1-type zinc-finger motif lies at 33 to 118; the sequence is AARKLMSRSD…LQEARTLEFD (86 aa). The Zn(2+) site is built by Cys-56, Cys-61, Cys-94, and Cys-98. Disordered regions lie at residues 179–201, 349–374, and 519–538; these read VPFD…QEKH, GKNT…KSRK, and EHSE…WPNK. Residues 349–364 are compositionally biased toward low complexity; the sequence is GKNTLSGSSSGSNTKG. Residues 519–530 show a composition bias toward acidic residues; it reads EHSEEEMTEEEP.

Belongs to the RPAP2 family.

The protein localises to the nucleus. The catalysed reaction is O-phospho-L-seryl-[protein] + H2O = L-seryl-[protein] + phosphate. The enzyme catalyses O-phospho-L-threonyl-[protein] + H2O = L-threonyl-[protein] + phosphate. Putative RNA polymerase II subunit B1 C-terminal domain (CTD) phosphatase involved in RNA polymerase II transcription regulation. This is Putative RNA polymerase II subunit B1 CTD phosphatase RPAP2 homolog from Arabidopsis thaliana (Mouse-ear cress).